The primary structure comprises 105 residues: Integration host factor (105 aa).

Residues 64-71 carry the H2TH motif, binds DNA motif; the sequence is LPKVGKVK. The lid, binds DNA stretch occupies residues 82–94; sequence APTRRLRGLGDRQ.

It belongs to the actinobacterial IHF (aIHF) family. In terms of assembly, binds DNA as a monomer. As to quaternary structure, (Microbial infection) Forms a complex with L5 Int and attP DNA. The complex binds attB to form products.

The protein resides in the cytoplasm. It is found in the nucleoid. Functionally, a nucleoid-associated protein (NAP) that binds DNA without any sequence specificity. Compacts DNA. Binds along the whole chromosome in a dynamic manner, has equal affinity for the oriC site, attB and a randon 62% GC-rich sequence. Plays a role in transcription regulation. In terms of biological role, (Microbial infection) Stimulates temperate Mycobacterium phage L5 Int-mediated recombination in vitro using supercoiled attP (phage attachment site) DNA, linear attB DNA (bacterial attachment site) and L5 integrase (L5 Int or Int-L5, AC P22884). mIHF acts on L5 Int to stimulate formation of a specific intasome complex. mIHF probably stabilizes a sharp bend in the DNA during phage integration. In Mycolicibacterium smegmatis (strain ATCC 700084 / mc(2)155) (Mycobacterium smegmatis), this protein is Integration host factor.